A 981-amino-acid chain; its full sequence is Transcription factor TAC1 (981 aa).

Over residues 1-29 the composition is skewed to polar residues; it reads MDTSSSSGTHPSTFNNLTKQQELTGNDPN. Positions 1 to 33 are disordered; that stretch reads MDTSSSSGTHPSTFNNLTKQQELTGNDPNDTNR. The zn(2)-C6 fungal-type DNA-binding region spans 40–68; that stretch reads CDSCRRKKIKCNGSYPCGNCIQAKNTSNC. Disordered regions lie at residues 74–106, 165–199, and 868–902; these read PVRK…TFSG, HSNS…TSHS, and LRDN…SNST. Low complexity predominate over residues 165–177; the sequence is HSNSSMFNNNSLS. The span at 868–880 shows a compositional bias: polar residues; it reads LRDNSTNHGQNNM. Residues 881-902 are compositionally biased toward low complexity; the sequence is NPSPTITNNTYNSNINTGSNST.

Post-translationally, phosphorylated. Phosphorylation leads to hyperactivation.

The protein resides in the nucleus. Its activity is regulated as follows. Drugs such as farnesol and 1-dodecanol are able to hyperactivate TAC1 probably via phosphorylation by the Mediator complex. Its function is as follows. Transcriptional activator of drug-responsive genes including the ABC-type transporters CDR1 and CDR2, as well as HSP12 and RTA3. Binds the cis-acting regulatory drug-responsive elements (DREs) with the consensus sequence 5'-CGGAWATCGGATATTTTTTT-3' in the promoters of target genes. In Candida albicans (strain SC5314 / ATCC MYA-2876) (Yeast), this protein is Transcription factor TAC1.